A 305-amino-acid chain; its full sequence is tRNA pseudouridine synthase B (305 aa).

D50 acts as the Nucleophile in catalysis.

It belongs to the pseudouridine synthase TruB family. Type 1 subfamily.

It carries out the reaction uridine(55) in tRNA = pseudouridine(55) in tRNA. Responsible for synthesis of pseudouridine from uracil-55 in the psi GC loop of transfer RNAs. The chain is tRNA pseudouridine synthase B from Rhodococcus jostii (strain RHA1).